Consider the following 136-residue polypeptide: Late embryogenesis abundant protein D-7 (136 aa).

2 disordered regions span residues 1–108 (MASH…AQGA) and 117–136 (GMADADEDEHNYPATVTRKD). Residues 11–58 (GRAEGRAHEKGEQMKESMKEKAEAAKQKTMETAEAAKQKTMETAEAAK) show a composition bias toward basic and acidic residues. 5 LEA 11-mer repeat repeats span residues 31–41 (KAEAAKQKTME), 42–52 (TAEAAKQKTME), 53–63 (TAEAAKQKTRG), 64–74 (AAETTNDKTKQ), and 75–85 (TAGAARGKAEE).

It belongs to the LEA type 4 family.

LEA proteins are late embryonic proteins abundant in higher plant seed embryos. There are two subsets of LEA proteins (5a and 5b), the first ones are expressed when the cotyledon weight reach 80 mg and the second set are expressed above 100 mg. The function of those proteins is not known. The protein is Late embryogenesis abundant protein D-7 of Gossypium hirsutum (Upland cotton).